The chain runs to 264 residues: Thymidylate synthase (264 aa).

Arginine 21 is a binding site for dUMP. A (6R)-5,10-methylene-5,6,7,8-tetrahydrofolate-binding site is contributed by histidine 51. DUMP is bound at residue 126–127 (RR). Catalysis depends on cysteine 146, which acts as the Nucleophile. DUMP is bound by residues 166 to 169 (RSAD), asparagine 177, and 207 to 209 (HIY). Residue aspartate 169 coordinates (6R)-5,10-methylene-5,6,7,8-tetrahydrofolate. Alanine 263 is a (6R)-5,10-methylene-5,6,7,8-tetrahydrofolate binding site.

Belongs to the thymidylate synthase family. Bacterial-type ThyA subfamily. As to quaternary structure, homodimer.

It localises to the cytoplasm. The catalysed reaction is dUMP + (6R)-5,10-methylene-5,6,7,8-tetrahydrofolate = 7,8-dihydrofolate + dTMP. The protein operates within pyrimidine metabolism; dTTP biosynthesis. Functionally, catalyzes the reductive methylation of 2'-deoxyuridine-5'-monophosphate (dUMP) to 2'-deoxythymidine-5'-monophosphate (dTMP) while utilizing 5,10-methylenetetrahydrofolate (mTHF) as the methyl donor and reductant in the reaction, yielding dihydrofolate (DHF) as a by-product. This enzymatic reaction provides an intracellular de novo source of dTMP, an essential precursor for DNA biosynthesis. The chain is Thymidylate synthase from Agrobacterium fabrum (strain C58 / ATCC 33970) (Agrobacterium tumefaciens (strain C58)).